We begin with the raw amino-acid sequence, 491 residues long: Ketol-acid reductoisomerase (NADP(+)) (491 aa).

The 194-residue stretch at 15–208 (AQLGKCRFMG…GGHRAGVLES (194 aa)) folds into the KARI N-terminal Rossmann domain. Residues 45 to 48 (CGAQ), Arg-68, Arg-76, Ser-78, and 108 to 110 (DKQ) contribute to the NADP(+) site. The active site involves His-132. Gly-158 is a binding site for NADP(+). KARI C-terminal knotted domains follow at residues 209–344 (SFVA…TAPQ) and 345–484 (YEGK…MTDM). The Mg(2+) site is built by Asp-217, Glu-221, Glu-389, and Glu-393. Ser-414 is a substrate binding site.

This sequence belongs to the ketol-acid reductoisomerase family. It depends on Mg(2+) as a cofactor.

The catalysed reaction is (2R)-2,3-dihydroxy-3-methylbutanoate + NADP(+) = (2S)-2-acetolactate + NADPH + H(+). It catalyses the reaction (2R,3R)-2,3-dihydroxy-3-methylpentanoate + NADP(+) = (S)-2-ethyl-2-hydroxy-3-oxobutanoate + NADPH + H(+). Its pathway is amino-acid biosynthesis; L-isoleucine biosynthesis; L-isoleucine from 2-oxobutanoate: step 2/4. The protein operates within amino-acid biosynthesis; L-valine biosynthesis; L-valine from pyruvate: step 2/4. Its function is as follows. Involved in the biosynthesis of branched-chain amino acids (BCAA). Catalyzes an alkyl-migration followed by a ketol-acid reduction of (S)-2-acetolactate (S2AL) to yield (R)-2,3-dihydroxy-isovalerate. In the isomerase reaction, S2AL is rearranged via a Mg-dependent methyl migration to produce 3-hydroxy-3-methyl-2-ketobutyrate (HMKB). In the reductase reaction, this 2-ketoacid undergoes a metal-dependent reduction by NADPH to yield (R)-2,3-dihydroxy-isovalerate. In Escherichia coli O7:K1 (strain IAI39 / ExPEC), this protein is Ketol-acid reductoisomerase (NADP(+)).